Here is a 193-residue protein sequence, read N- to C-terminus: CASP-like protein 1F3 (193 aa).

A disordered region spans residues 1–25; that stretch reads MASPQNTSQKRFFQANSPGGMPTAS. The Cytoplasmic portion of the chain corresponds to 1–35; it reads MASPQNTSQKRFFQANSPGGMPTASQSQRSRILAQ. The helical transmembrane segment at 36-56 threads the bilayer; it reads ITLRFLAIAFTVTAIPVMITA. The Extracellular portion of the chain corresponds to 57–78; the sequence is KEPVSLLGLAITPSYKQSSAMK. A helical transmembrane segment spans residues 79–99; that stretch reads FLLGVNATVFAFTALSMLFVW. Over 100 to 118 the chain is Cytoplasmic; it reads PLRRSGSKPINYFFLHLHD. Residues 119 to 139 form a helical membrane-spanning segment; the sequence is MVMTLLLISGCAAATAVGYLS. Residues 140–161 are Extracellular-facing; the sequence is QYGQPETYWSPICDIVKKFCHQ. A helical membrane pass occupies residues 162–182; sequence MLISTVLSYLAFFCYLALNIL. Topologically, residues 183–193 are cytoplasmic; sequence SVHKLMSRATE.

This sequence belongs to the Casparian strip membrane proteins (CASP) family. In terms of assembly, homodimer and heterodimers.

Its subcellular location is the cell membrane. The chain is CASP-like protein 1F3 from Populus trichocarpa (Western balsam poplar).